A 341-amino-acid chain; its full sequence is Phenylalanine--tRNA ligase alpha subunit (341 aa).

Mg(2+) is bound at residue Glu256.

It belongs to the class-II aminoacyl-tRNA synthetase family. Phe-tRNA synthetase alpha subunit type 1 subfamily. In terms of assembly, tetramer of two alpha and two beta subunits. Requires Mg(2+) as cofactor.

The protein resides in the cytoplasm. The catalysed reaction is tRNA(Phe) + L-phenylalanine + ATP = L-phenylalanyl-tRNA(Phe) + AMP + diphosphate + H(+). The protein is Phenylalanine--tRNA ligase alpha subunit of Chlamydia abortus (strain DSM 27085 / S26/3) (Chlamydophila abortus).